We begin with the raw amino-acid sequence, 1728 residues long: U3 small nucleolar RNA-associated protein 10 (1728 aa).

7 HEAT repeats span residues 540 to 578 (DKDFQAIIPYCAVALSDPAKKVRRAAADLIAVLGSLVKE), 881 to 926 (PANH…MMPA), 986 to 1024 (FMGSSEVIPPLIDTFRRRGRNVVASTKDLLASFVTAYEH), 1191 to 1229 (LLSIAEFIKSVEALLDRPNVGLRQKVLRALELRVDSEST), 1235 to 1274 (REALLAFLPQLTAVIRESDDMSYKHTAVTCVDKISEKYGK), 1622 to 1662 (ADAT…GQAA), and 1683 to 1721 (LQALPEMLPYISELQDDDDEVVERENRRWIVEIEEKLGE).

It belongs to the HEATR1/UTP10 family. Component of the ribosomal small subunit (SSU) processome.

It is found in the nucleus. Its subcellular location is the nucleolus. In terms of biological role, involved in nucleolar processing of pre-18S ribosomal RNA. Involved in ribosome biosynthesis. This chain is U3 small nucleolar RNA-associated protein 10, found in Chaetomium globosum (strain ATCC 6205 / CBS 148.51 / DSM 1962 / NBRC 6347 / NRRL 1970) (Soil fungus).